A 752-amino-acid polypeptide reads, in one-letter code: Probable beta-glucosidase D (752 aa).

Positions 1–18 (MRFVSLAVGAALLGAAGA) are cleaved as a signal peptide. Residues Asn-187 and Asn-237 are each glycosylated (N-linked (GlcNAc...) asparagine). Asp-265 is a catalytic residue. Asn-299, Asn-343, Asn-441, Asn-510, Asn-532, Asn-571, Asn-586, Asn-638, Asn-661, and Asn-743 each carry an N-linked (GlcNAc...) asparagine glycan.

It belongs to the glycosyl hydrolase 3 family.

It is found in the secreted. The catalysed reaction is Hydrolysis of terminal, non-reducing beta-D-glucosyl residues with release of beta-D-glucose.. It functions in the pathway glycan metabolism; cellulose degradation. Functionally, beta-glucosidases are one of a number of cellulolytic enzymes involved in the degradation of cellulosic biomass. Catalyzes the last step releasing glucose from the inhibitory cellobiose. This Aspergillus flavus (strain ATCC 200026 / FGSC A1120 / IAM 13836 / NRRL 3357 / JCM 12722 / SRRC 167) protein is Probable beta-glucosidase D (bglD).